The chain runs to 119 residues: Non-specific lipid-transfer protein 3 (119 aa).

The N-terminal stretch at 1–24 is a signal peptide; that stretch reads MARSMKLACVVLAMCMLVAPMAEA. 4 disulfide bridges follow: C28–C77, C38–C54, C55–C100, and C75–C114.

This sequence belongs to the plant LTP family. Expressed in roots, stem, leaves and tendrils of the mature plant.

Its function is as follows. Plant non-specific lipid-transfer proteins transfer phospholipids as well as galactolipids across membranes. May play a role in wax or cutin deposition in the cell walls of expanding epidermal cells and certain secretory tissues. The protein is Non-specific lipid-transfer protein 3 of Pisum sativum (Garden pea).